Consider the following 335-residue polypeptide: DNA-directed RNA polymerases I and III subunit RPAC1 (335 aa).

Residue serine 2 is modified to N-acetylserine. Phosphoserine is present on serine 17.

This sequence belongs to the archaeal Rpo3/eukaryotic RPB3 RNA polymerase subunit family. Component of the RNA polymerase I (Pol I) complex consisting of 14 subunits: RPA135, RPA190, RPC40, RPA14, RPB5, RPO26, RPA43, RPB8, RPA12, RPB10, RPC19, RPC10, RPA49 and RPA34. The complex is composed of a horseshoe-shaped core containing ten subunits (RPA135, RPA190, RPB5, RPO26, RPB8, RPB10, RPC10, RPA12, RPC19 and RPC40) where RPA135 and RPA190 form the DNA-binding cleft. Outside of the core, RPA14 and RPA43 form the stalk that mediates interactions with transcription initiation factors and newly synthesized RNA. Component of the RNA polymerase III (Pol III) complex consisting of at least 17 subunits. Interacts with the RPC19/RPAC2 and RPC53/RPC4. Interacts with retrotransposons Ty integrase, targeting Ty1, Ty2 and Ty4 integration upstream of pol III-transcribed genes.

It is found in the nucleus. The protein resides in the nucleolus. DNA-dependent RNA polymerases catalyze the transcription of DNA into RNA using the four ribonucleoside triphosphates as substrates. Common component of RNA polymerases I (Pol I) and III (Pol III) which synthesize ribosomal RNA precursors and small RNAs, such as 5S rRNA and tRNAs, respectively. RPC40 is part of the polymerase core and may function as a clamp element that moves to open and close the cleft. Plays an important role in targeting retrotransposons Ty integration upstream of pol III-transcribed genes such as tRNA genes, allowing Ty1, Ty2 and Ty4 to proliferate and yet minimizing genetic damage. This Saccharomyces cerevisiae (strain ATCC 204508 / S288c) (Baker's yeast) protein is DNA-directed RNA polymerases I and III subunit RPAC1.